Consider the following 1067-residue polypeptide: [F-actin]-monooxygenase MICAL1 (1067 aa).

The monooxygenase domain stretch occupies residues Met1–Glu489. Residues Cys95, Glu114–Arg116, Arg121–Asn123, Phe181, Tyr293, and Asp393 each bind FAD. Thr475 is modified (phosphothreonine). The Calponin-homology (CH) domain maps to Ala508–Lys612. Ser617 is subject to Phosphoserine. Residues Ser645–His688 are disordered. Residues Arg646–Met663 show a composition bias toward basic and acidic residues. Residues Arg646–Glu666 adopt a coiled-coil conformation. Over residues Glu671 to Pro684 the composition is skewed to pro residues. The LIM zinc-binding domain maps to Asp695 to Lys757. The Zn(2+) site is built by Cys697, Cys700, His718, Cys721, Cys724, Cys727, Cys747, and His750. Basic and acidic residues predominate over residues Asp755–Glu766. Disordered stretches follow at residues Asp755–Ser838 and Lys867–Asp886. Residues Pro773–Gln789 are compositionally biased toward polar residues. 3 positions are modified to phosphoserine: Ser872, Ser875, and Ser876. Acidic residues predominate over residues Ser876 to Asp886. The tract at residues Gly901–Gly1067 is important for interaction with RAB8A. The bMERB domain maps to Lys918 to Gly1067. Coiled-coil stretches lie at residues Glu919–Ser962 and Asn999–Arg1027. Residue Ser1057 is modified to Phosphoserine.

It belongs to the Mical family. Interacts with STK38 and STK38L. Interacts with RAB1B, RAB8A, RAB10, RAB13, RAB15 and RAB35 (in their GTP-bound forms); binding to RAB1B is of low affinity compared to other Rab proteins; at least in case of RAB8A and RAB10 can bind 2 molecules of the Rab proteins simultaneously; ternary complex formation of RAB8A, RAB13 and MICAL1 is possible. Associates with the SH3 domain of NEDD9. Interacts with VIM and PLXNA3. Interacts with GRAF1/ARHGAP26, GRAF2/ARHGAP10, RAB8A, RAB8B and RAB10; may bind simultaneously to GRAFs and Rabs and connects GRAFs to Rabs. Does not interact with RAB1 and RAB11A. FAD is required as a cofactor. Expressed in the thymus, lung, spleen, kidney, testis and hematopoietic cells.

The protein resides in the cytoplasm. It localises to the cytoskeleton. Its subcellular location is the endosome membrane. The protein localises to the midbody. It carries out the reaction L-methionyl-[F-actin] + NADPH + O2 + H(+) = L-methionyl-(R)-S-oxide-[F-actin] + NADP(+) + H2O. The catalysed reaction is NADPH + O2 + H(+) = H2O2 + NADP(+). Functionally, monooxygenase that promotes depolymerization of F-actin by mediating oxidation of specific methionine residues on actin to form methionine-sulfoxide, resulting in actin filament disassembly and preventing repolymerization. In the absence of actin, it also functions as a NADPH oxidase producing H(2)O(2). Acts as a cytoskeletal regulator that connects NEDD9 to intermediate filaments. Also acts as a negative regulator of apoptosis via its interaction with STK38 and STK38L; acts by antagonizing STK38 and STK38L activation by MST1/STK4. Involved in regulation of lamina-specific connectivity in the nervous system such as the development of lamina-restricted hippocampal connections. Through redox regulation of the actin cytoskeleton controls the intracellular distribution of secretory vesicles containing L1/neurofascin/NgCAM family proteins in neurons, thereby regulating their cell surface levels. May act as Rab effector protein and play a role in vesicle trafficking. Promotes endosomal tubule extension by associating with RAB8 (RAB8A or RAB8B), RAB10 and GRAF (GRAF1/ARHGAP26 or GRAF2/ARHGAP10) on the endosomal membrane which may connect GRAFs to Rabs, thereby participating in neosynthesized Rab8-Rab10-Rab11-dependent protein export. The chain is [F-actin]-monooxygenase MICAL1 (MICAL1) from Homo sapiens (Human).